A 382-amino-acid polypeptide reads, in one-letter code: Membrane protein MLC1 (382 aa).

Basic and acidic residues predominate over residues 1–28 (MTREGQFREELGYDRMPTLERGRQDAGR). Residues 1 to 43 (MTREGQFREELGYDRMPTLERGRQDAGRQDPGSYTPDSKPKDL) are disordered. Helical transmembrane passes span 58–78 (WVFS…SLYL), 88–107 (YLRC…FAVG), 117–137 (FQIL…WFGC), and 148–168 (INFN…TVII). Phosphoserine is present on residues Ser-183, Ser-185, and Ser-188. Helical transmembrane passes span 205 to 225 (SVVE…ALNV), 234 to 254 (LSVT…ASHV), 263 to 283 (LVEV…TASG), and 309 to 329 (LLLL…GTAI).

In terms of assembly, interacts with ATP1B1. Part of a complex containing ATP1B1, TRPV4, AQP4 and HEPACAM.

The protein localises to the membrane. It localises to the cell membrane. It is found in the cytoplasm. The protein resides in the perinuclear region. Its subcellular location is the endoplasmic reticulum. Transmembrane protein mainly expressed in brain astrocytes that may play a role in transport across the blood-brain and brain-cerebrospinal fluid barriers. Regulates the response of astrocytes to hypo-osmosis by promoting calcium influx. May function as regulatory protein of membrane protein complexes such as ion channels. In Mus musculus (Mouse), this protein is Membrane protein MLC1.